A 507-amino-acid chain; its full sequence is ATP synthase subunit alpha, chloroplastic (507 aa).

An ATP-binding site is contributed by 170–177 (GDRQTGKT).

The protein belongs to the ATPase alpha/beta chains family. F-type ATPases have 2 components, CF(1) - the catalytic core - and CF(0) - the membrane proton channel. CF(1) has five subunits: alpha(3), beta(3), gamma(1), delta(1), epsilon(1). CF(0) has four main subunits: a, b, b' and c.

It localises to the plastid. The protein localises to the chloroplast thylakoid membrane. The catalysed reaction is ATP + H2O + 4 H(+)(in) = ADP + phosphate + 5 H(+)(out). In terms of biological role, produces ATP from ADP in the presence of a proton gradient across the membrane. The alpha chain is a regulatory subunit. The sequence is that of ATP synthase subunit alpha, chloroplastic from Silene latifolia (White campion).